The chain runs to 401 residues: Phosphoglycerate kinase (401 aa).

Residues Asp-20–Asn-22, Arg-35, His-58–Arg-61, Arg-117, and Arg-154 each bind substrate. ATP-binding positions include Lys-204, Gly-298, Glu-329, and Gly-358–Ser-361.

Belongs to the phosphoglycerate kinase family. As to quaternary structure, monomer.

It is found in the cytoplasm. The catalysed reaction is (2R)-3-phosphoglycerate + ATP = (2R)-3-phospho-glyceroyl phosphate + ADP. The protein operates within carbohydrate degradation; glycolysis; pyruvate from D-glyceraldehyde 3-phosphate: step 2/5. The sequence is that of Phosphoglycerate kinase from Bifidobacterium longum (strain NCC 2705).